Here is a 414-residue protein sequence, read N- to C-terminus: Esterase FrsA (414 aa).

This sequence belongs to the FrsA family.

The enzyme catalyses a carboxylic ester + H2O = an alcohol + a carboxylate + H(+). Its function is as follows. Catalyzes the hydrolysis of esters. This Escherichia coli O157:H7 protein is Esterase FrsA.